The chain runs to 324 residues: Cyclic GMP-AMP synthase CdnE03 (324 aa).

Mg(2+)-binding residues include Asp-87 and Asp-89. ATP is bound by residues Asp-89, 144–145 (NK), and Asp-159. Asp-159 serves as a coordination point for Mg(2+). GTP is bound by residues Lys-224 and Ser-243.

Belongs to the CD-NTase family. E03 subfamily. It depends on Mg(2+) as a cofactor.

The enzyme catalyses GTP + ATP = 3',2'-cGAMP + 2 diphosphate. Its activity is regulated as follows. Activated by a virus-derived, approximately 400 nucleotide RNA (called CBASS-activating bacteriophage RNA, cabRNA) that begins in the viral terminase subunit terS and extends into terL. RNA secondary and/or tertiary structure, as well as viral infection itself, are important for CdnE activation. A much longer RNA (escaper RNA) with a different secondary structure, derived from a terS-mutated virus still binds to this protein, but does not activate its nucleotide cyclase activity. Shorter viral-derived RNAs (34 and 49 nt) with extensive predicted secondary structure also activate the enzyme, although not as well as full-length cabRNA. Its function is as follows. Cyclic nucleotide synthase (second messenger synthase) of a CBASS antivirus system. CBASS (cyclic oligonucleotide-based antiphage signaling system) provides immunity against bacteriophage. The CD-NTase protein synthesizes cyclic nucleotides in response to infection; these serve as specific second messenger signals. The signals activate a diverse range of effectors, leading to bacterial cell death and thus abortive phage infection. The effector for this system is downstream Cap15. A type I-B CBASS system. Functionally, cyclic dinucleotide synthase that catalyzes the synthesis of 3',2'-cyclic GMP-AMP (cGAMP) from GTP and ATP upon activation by viral-derived cabRNA. Binds cabRNA via positive charges in its N-terminus. In terms of biological role, protects S.aureus against phage infection. When the CBASS operon (cdnE-cap15) is introduced in S.aureus strain RN4220 there is strong protection against lytic DNA phages 80alpha-vir and phi-NM1-gamma-6 but little to no protection against phages phi-NM4-gamma-4 or phi-12-gamma-3. The protein is Cyclic GMP-AMP synthase CdnE03 of Staphylococcus schleiferi.